A 134-amino-acid chain; its full sequence is Cytochrome b (134 aa).

3 consecutive transmembrane segments (helical) span residues 33-53 (FGSL…FLAM), 77-98 (WILR…FLHV), and 113-133 (WNIG…GYVL). Residues His-83 and His-97 each contribute to the heme b site.

The protein belongs to the cytochrome b family. As to quaternary structure, the cytochrome bc1 complex contains 11 subunits: 3 respiratory subunits (MT-CYB, CYC1 and UQCRFS1), 2 core proteins (UQCRC1 and UQCRC2) and 6 low-molecular weight proteins (UQCRH/QCR6, UQCRB/QCR7, UQCRQ/QCR8, UQCR10/QCR9, UQCR11/QCR10 and a cleavage product of UQCRFS1). This cytochrome bc1 complex then forms a dimer. The cofactor is heme b.

It localises to the mitochondrion inner membrane. Functionally, component of the ubiquinol-cytochrome c reductase complex (complex III or cytochrome b-c1 complex) that is part of the mitochondrial respiratory chain. The b-c1 complex mediates electron transfer from ubiquinol to cytochrome c. Contributes to the generation of a proton gradient across the mitochondrial membrane that is then used for ATP synthesis. The sequence is that of Cytochrome b (MT-CYB) from Rhinolophus hipposideros (Lesser horseshoe bat).